Here is a 221-residue protein sequence, read N- to C-terminus: Germin-like protein subfamily 1 member 15 (221 aa).

The signal sequence occupies residues 1 to 21 (MKVSMSLILITFWALVTIAKA). Cys-31 and Cys-48 are disulfide-bonded. The Cupin type-1 domain maps to 62–213 (SGLNQAGITN…AFQLDVNVVK (152 aa)). Asn-77 is a glycosylation site (N-linked (GlcNAc...) asparagine). Residues His-110, His-112, Glu-117, and His-159 each coordinate Mn(2+).

It belongs to the germin family. Oligomer (believed to be a pentamer but probably hexamer).

The protein resides in the secreted. The protein localises to the extracellular space. It is found in the apoplast. In terms of biological role, may play a role in plant defense. Probably has no oxalate oxidase activity even if the active site is conserved. The polypeptide is Germin-like protein subfamily 1 member 15 (Arabidopsis thaliana (Mouse-ear cress)).